A 164-amino-acid chain; its full sequence is MGDVEIPPLVKQIVRGLRGLAFLATILATSFMAASHERAIFPFDYKADYTDLMLFKAFLGANIAASLYSFFFVCLPPKSLLWRLAIVLDVIMFGLLVAMDSAAIAAAYLHKHGDSQAFWPPICSQVPTYCYRVILAISIGFGGVFMFLLIIIISISVILNPLLV.

Topologically, residues 1–15 are cytoplasmic; it reads MGDVEIPPLVKQIVR. The chain crosses the membrane as a helical span at residues 16 to 36; it reads GLRGLAFLATILATSFMAASH. At 37–56 the chain is on the extracellular side; sequence ERAIFPFDYKADYTDLMLFK. The chain crosses the membrane as a helical span at residues 57 to 77; sequence AFLGANIAASLYSFFFVCLPP. Residues 78 to 83 are Cytoplasmic-facing; it reads KSLLWR. Residues 84 to 104 form a helical membrane-spanning segment; the sequence is LAIVLDVIMFGLLVAMDSAAI. The Extracellular portion of the chain corresponds to 105–132; sequence AAAYLHKHGDSQAFWPPICSQVPTYCYR. Residues 133-153 form a helical membrane-spanning segment; it reads VILAISIGFGGVFMFLLIIII. Residues 154–164 lie on the Cytoplasmic side of the membrane; sequence SISVILNPLLV.

This sequence belongs to the Casparian strip membrane proteins (CASP) family. Homodimer and heterodimers.

The protein resides in the cell membrane. In Populus trichocarpa (Western balsam poplar), this protein is CASP-like protein 1C1.